Reading from the N-terminus, the 278-residue chain is Urease accessory protein UreD 1 (278 aa).

The protein belongs to the UreD family. UreD, UreF and UreG form a complex that acts as a GTP-hydrolysis-dependent molecular chaperone, activating the urease apoprotein by helping to assemble the nickel containing metallocenter of UreC. The UreE protein probably delivers the nickel.

The protein localises to the cytoplasm. Its function is as follows. Required for maturation of urease via the functional incorporation of the urease nickel metallocenter. The polypeptide is Urease accessory protein UreD 1 (Bradyrhizobium sp. (strain ORS 278)).